The chain runs to 289 residues: NFU1 iron-sulfur cluster scaffold homolog, mitochondrial (289 aa).

The N-terminal 56 residues, 1–56 (MAKLISYAKGGFLRNTRLTSRAVPQVYQHATSSRGFVHLTSSVAQSSAIHVSTPST), are a transit peptide targeting the mitochondrion. Residues 183-251 (IKELLDTRIR…IPEVESVEQV (69 aa)) form a nifU region. 2 residues coordinate [4Fe-4S] cluster: Cys-220 and Cys-223. Residues 267 to 289 (ERNLKQKDTSSTAPVGIGGGPAN) form a disordered region.

Belongs to the NifU family.

The protein localises to the mitochondrion. Functionally, molecular scaffold for [Fe-S] cluster assembly of mitochondrial iron-sulfur proteins. The sequence is that of NFU1 iron-sulfur cluster scaffold homolog, mitochondrial from Drosophila willistoni (Fruit fly).